Consider the following 206-residue polypeptide: uncharacterized protein (206 aa).

Residues 4–24 (LLVVIAVALFIAAIVVLVVAI) traverse the membrane as a helical segment.

It is found in the membrane. This is an uncharacterized protein from Mycobacterium tuberculosis (strain CDC 1551 / Oshkosh).